A 262-amino-acid polypeptide reads, in one-letter code: Acyl-[acyl-carrier-protein]--UDP-N-acetylglucosamine O-acyltransferase (262 aa).

Belongs to the transferase hexapeptide repeat family. LpxA subfamily. In terms of assembly, homotrimer.

The protein resides in the cytoplasm. It carries out the reaction a (3R)-hydroxyacyl-[ACP] + UDP-N-acetyl-alpha-D-glucosamine = a UDP-3-O-[(3R)-3-hydroxyacyl]-N-acetyl-alpha-D-glucosamine + holo-[ACP]. The protein operates within glycolipid biosynthesis; lipid IV(A) biosynthesis; lipid IV(A) from (3R)-3-hydroxytetradecanoyl-[acyl-carrier-protein] and UDP-N-acetyl-alpha-D-glucosamine: step 1/6. Its function is as follows. Involved in the biosynthesis of lipid A, a phosphorylated glycolipid that anchors the lipopolysaccharide to the outer membrane of the cell. This is Acyl-[acyl-carrier-protein]--UDP-N-acetylglucosamine O-acyltransferase from Burkholderia ambifaria (strain MC40-6).